The following is a 307-amino-acid chain: MLKEEVLRLKREKNAVILAHNYQLPEVKDVADFIGDSLNLSMEAARTKADIIVFAGVYFMAETAAILNPDKKVLIPDPGAGCSLASSVSAADVLEWRRRHPNGVVVAYINTYAEVKAVSDYVCTSANCLKIIEAIPSDRPVLFLPDKYLGLYIKAKTGREIDIWDGECHVHAKITSPKITAKIKLYRDAEVLIHPECGCGTACLLELPKMGLSPKFLSTEGMVKYVKQSPARRFIIATEVGIIDRLEREAPGKEYIPAAEDAICEYMKLITLDKVHRSLKEEIYRVVVPEDIAKKARLAIERMFEFA.

Residues His20 and Ser37 each contribute to the iminosuccinate site. Cys82 is a [4Fe-4S] cluster binding site. Residues 108-110 (YIN) and Ser125 each bind iminosuccinate. Cys168 provides a ligand contact to [4Fe-4S] cluster. Residues 194 to 196 (HPE) and Thr219 contribute to the iminosuccinate site. Cys264 is a binding site for [4Fe-4S] cluster.

It belongs to the quinolinate synthase family. Type 2 subfamily. Requires [4Fe-4S] cluster as cofactor.

It is found in the cytoplasm. It carries out the reaction iminosuccinate + dihydroxyacetone phosphate = quinolinate + phosphate + 2 H2O + H(+). It functions in the pathway cofactor biosynthesis; NAD(+) biosynthesis; quinolinate from iminoaspartate: step 1/1. Functionally, catalyzes the condensation of iminoaspartate with dihydroxyacetone phosphate to form quinolinate. The sequence is that of Quinolinate synthase from Pyrobaculum aerophilum (strain ATCC 51768 / DSM 7523 / JCM 9630 / CIP 104966 / NBRC 100827 / IM2).